An 89-amino-acid chain; its full sequence is GTP cyclohydrolase 1 feedback regulatory protein (89 aa).

It belongs to the GFRP family. Homopentamer. Forms a complex with GCH1 where a GCH1 homodecamer is sandwiched by two GFRP homopentamers.

It is found in the nucleus. The protein resides in the nucleus membrane. It localises to the cytoplasm. Its subcellular location is the cytosol. In terms of biological role, mediates tetrahydrobiopterin inhibition of GTP cyclohydrolase 1. The chain is GTP cyclohydrolase 1 feedback regulatory protein (gchfr) from Danio rerio (Zebrafish).